The primary structure comprises 350 residues: Phenylalanine--tRNA ligase alpha subunit (350 aa).

Residue E271 participates in Mg(2+) binding.

Belongs to the class-II aminoacyl-tRNA synthetase family. Phe-tRNA synthetase alpha subunit type 1 subfamily. Tetramer of two alpha and two beta subunits. Requires Mg(2+) as cofactor.

It localises to the cytoplasm. The catalysed reaction is tRNA(Phe) + L-phenylalanine + ATP = L-phenylalanyl-tRNA(Phe) + AMP + diphosphate + H(+). This Acidovorax ebreus (strain TPSY) (Diaphorobacter sp. (strain TPSY)) protein is Phenylalanine--tRNA ligase alpha subunit.